A 294-amino-acid polypeptide reads, in one-letter code: sn-glycerol-3-phosphate transport system permease protein UgpA (294 aa).

The Cytoplasmic portion of the chain corresponds to 1-11; sequence MSPSRPGFSCS. A helical transmembrane segment spans residues 12–32; that stretch reads WLPYLLVLPQLAITAIFFLWP. Residues 33-80 are Periplasmic-facing; it reads AGEALWYSVQTLDPFGLSSEFVGLSNFIQLFQDEYYLASFYTTLIFSA. Residues 72 to 284 enclose the ABC transmembrane type-1 domain; that stretch reads FYTTLIFSAL…LLVIGLTVIQ (213 aa). Residues 81–101 form a helical membrane-spanning segment; the sequence is LVAGIGLNVSLFLAAMVDYVL. Residues 102 to 109 are Cytoplasmic-facing; that stretch reads RGSRLYQT. The helical transmembrane segment at 110 to 130 threads the bilayer; it reads LLILPYAVAPAVAAVLWIFLF. Topologically, residues 131–157 are periplasmic; that stretch reads DPGLGLITHALAKLGYSWNHAQNSGQA. The helical transmembrane segment at 158–178 threads the bilayer; the sequence is MFLVVLASVWKQISYNFLFFL. The Cytoplasmic segment spans residues 179-207; the sequence is AALQSIPKSLVEAAAIDGAGPVRRFFNLV. The helical transmembrane segment at 208 to 228 threads the bilayer; sequence LPLISPVSFFLLVVNLVYAFF. At 229–262 the chain is on the periplasmic side; sequence DTFPVIDAATGGGPVQATTTLIYKIYREGFAGLD. A helical transmembrane segment spans residues 263-283; sequence LSSSAAQSVILMLLVIGLTVI. At 284–294 the chain is on the cytoplasmic side; it reads QFRFVERKVRY.

This sequence belongs to the binding-protein-dependent transport system permease family. UgpAE subfamily. As to quaternary structure, the complex is composed of two ATP-binding proteins (UgpC), two transmembrane proteins (UgpA and UgpE) and a solute-binding protein (UgpB).

It localises to the cell inner membrane. In terms of biological role, part of the ABC transporter complex UgpBAEC involved in sn-glycerol-3-phosphate (G3P) import. Probably responsible for the translocation of the substrate across the membrane. This chain is sn-glycerol-3-phosphate transport system permease protein UgpA (ugpA), found in Yersinia pseudotuberculosis serotype I (strain IP32953).